Reading from the N-terminus, the 333-residue chain is tRNA U34 carboxymethyltransferase (333 aa).

Residues K97, W111, K116, G136, 158-160 (DPS), 189-190 (IE), M205, Y209, and R324 each bind carboxy-S-adenosyl-L-methionine.

Belongs to the class I-like SAM-binding methyltransferase superfamily. CmoB family. As to quaternary structure, homotetramer.

It carries out the reaction carboxy-S-adenosyl-L-methionine + 5-hydroxyuridine(34) in tRNA = 5-carboxymethoxyuridine(34) in tRNA + S-adenosyl-L-homocysteine + H(+). Catalyzes carboxymethyl transfer from carboxy-S-adenosyl-L-methionine (Cx-SAM) to 5-hydroxyuridine (ho5U) to form 5-carboxymethoxyuridine (cmo5U) at position 34 in tRNAs. The protein is tRNA U34 carboxymethyltransferase of Chromohalobacter salexigens (strain ATCC BAA-138 / DSM 3043 / CIP 106854 / NCIMB 13768 / 1H11).